The primary structure comprises 599 residues: Dual specificity tyrosine-phosphorylation-regulated kinase 2 (599 aa).

A disordered region spans residues 1-55 (MLTRKPSAAAPAAYPTGRGGDTAVRQLQASPGIGAGAPRSGVGTGPPSPIALPPL). Ser30 carries the phosphoserine modification. Phosphothreonine; by ATM is present on Thr104. Positions 187–189 (KKR) match the Nuclear localization signal motif. Residues 220-533 (YEVLKVIGKG…PGQALRHPWL (314 aa)) form the Protein kinase domain. ATP-binding positions include 226–234 (IGKGSFGQV), Lys249, and 299–302 (FELL). Catalysis depends on Asp346, which acts as the Proton acceptor. Thr379 carries the post-translational modification Phosphothreonine; by MAP3K10. Tyr380 carries the post-translational modification Phosphotyrosine; by autocatalysis. Ser440 is subject to Phosphoserine; by ATM. Ser447 bears the Phosphoserine; by MAP3K10 mark.

This sequence belongs to the protein kinase superfamily. CMGC Ser/Thr protein kinase family. MNB/DYRK subfamily. In terms of assembly, component of an E3 ligase complex containing DYRK2, EDD/UBR5, DDB1 and DCAF1 (EDVP complex). Interacts directly with EDD/UBR5, DDB1 and DCAF1. Interacts with SIAH2 and MDM2. Interacts with MAP3K10 and NFATC1. May also interact with CCNL2. Requires Mg(2+) as cofactor. It depends on Mn(2+) as a cofactor. Post-translationally, autophosphorylates cotranslationally on the second tyrosine residue in the Tyr-X-Tyr motif in the activation loop, but once mature, does not have any protein tyrosine kinase activity. Phosphorylated at Thr-104 and Ser-440 by ATM in response to genotoxic stress. In terms of processing, under normal conditions, polyubiquitinated in the nucleus by MDM2, leading to its proteasomal degradation. Phosphorylation on Thr-104 and Ser-440 by ATM in response to genotoxic stress disrupts MDM2 binding and prevents MDM2-mediated ubiquitination and subsequent proteasomal degradation. Polyubiquitinated by SIAH2, leading to its proteasomal degradation. Polyubiquitinated by SIAH2 occurs under normal conditions, and is enhanced in response to hypoxia.

It is found in the cytoplasm. The protein resides in the nucleus. It catalyses the reaction L-seryl-[protein] + ATP = O-phospho-L-seryl-[protein] + ADP + H(+). The catalysed reaction is L-threonyl-[protein] + ATP = O-phospho-L-threonyl-[protein] + ADP + H(+). The enzyme catalyses L-tyrosyl-[protein] + ATP = O-phospho-L-tyrosyl-[protein] + ADP + H(+). Activated by autophosphorylation on the second tyrosine residue in the Tyr-X-Tyr motif in the activation loop. Its function is as follows. Serine/threonine-protein kinase involved in the regulation of the mitotic cell cycle, cell proliferation, apoptosis, organization of the cytoskeleton and neurite outgrowth. Functions in part via its role in ubiquitin-dependent proteasomal protein degradation. Functions downstream of ATM and phosphorylates p53/TP53 at 'Ser-46', and thereby contributes to the induction of apoptosis in response to DNA damage. Phosphorylates NFATC1, and thereby inhibits its accumulation in the nucleus and its transcription factor activity. Phosphorylates EIF2B5 at 'Ser-544', enabling its subsequent phosphorylation and inhibition by GSK3B. Likewise, phosphorylation of NFATC1, CRMP2/DPYSL2 and CRMP4/DPYSL3 promotes their subsequent phosphorylation by GSK3B. May play a general role in the priming of GSK3 substrates. Inactivates GYS1 by phosphorylation at 'Ser-641', and potentially also a second phosphorylation site, thus regulating glycogen synthesis. Mediates EDVP E3 ligase complex formation and is required for the phosphorylation and subsequent degradation of KATNA1. Phosphorylates TERT at 'Ser-457', promoting TERT ubiquitination by the EDVP complex. Phosphorylates SIAH2, and thereby increases its ubiquitin ligase activity. Promotes the proteasomal degradation of MYC and JUN, and thereby regulates progress through the mitotic cell cycle and cell proliferation. Promotes proteasomal degradation of GLI2 and GLI3, and thereby plays a role in smoothened and sonic hedgehog signaling. Phosphorylates CRMP2/DPYSL2, CRMP4/DPYSL3, DCX, EIF2B5, EIF4EBP1, GLI2, GLI3, GYS1, JUN, MDM2, MYC, NFATC1, p53/TP53, TAU/MAPT and KATNA1. Can phosphorylate histone H1, histone H3 and histone H2B (in vitro). Can phosphorylate CARHSP1 (in vitro). Plays a role in cytoskeleton organization and neurite outgrowth via its phosphorylation of DCX. The chain is Dual specificity tyrosine-phosphorylation-regulated kinase 2 from Mus musculus (Mouse).